A 346-amino-acid polypeptide reads, in one-letter code: Nucleoplasmin-like protein ANO39 (346 aa).

Ser-2 carries the N-acetylserine modification. N-linked (GlcNAc...) asparagine glycosylation occurs at Asn-85. Residues 123–141 are compositionally biased toward acidic residues; the sequence is DEEELEEDDEEEEEEDEVE. The disordered stretch occupies residues 123–285; it reads DEEELEEDDE…KAKAKTDTKL (163 aa). Ser-145 carries the phosphoserine; by CDC2 modification. Residues 171-180 are compositionally biased toward basic and acidic residues; that stretch reads AKLDKDADKK. The segment covering 181–247 has biased composition (acidic residues); that stretch reads EDDDEEEDDE…EEEEDEDEES (67 aa). N-linked (GlcNAc...) asparagine glycosylation occurs at Asn-264. A compositionally biased stretch (basic and acidic residues) spans 271–285; that stretch reads GDNKPKAKAKTDTKL.

This sequence belongs to the nucleoplasmin family. Post-translationally, phosphorylation occurs in oocytes during the progression of the first meiotic M phase. No phosphorylation is observed in immature oocytes. In terms of tissue distribution, expressed specifically in the oocytes of the ovaries.

It is found in the nucleus. It localises to the nucleolus. The protein resides in the cytoplasm. Functionally, binds double-stranded RNA and both single-stranded and double-stranded DNA. The polypeptide is Nucleoplasmin-like protein ANO39 (Patiria pectinifera (Starfish)).